We begin with the raw amino-acid sequence, 234 residues long: 2,3,4,5-tetrahydropyridine-2,6-dicarboxylate N-acetyltransferase (234 aa).

The protein belongs to the transferase hexapeptide repeat family. DapH subfamily.

It catalyses the reaction (S)-2,3,4,5-tetrahydrodipicolinate + acetyl-CoA + H2O = L-2-acetamido-6-oxoheptanedioate + CoA. The protein operates within amino-acid biosynthesis; L-lysine biosynthesis via DAP pathway; LL-2,6-diaminopimelate from (S)-tetrahydrodipicolinate (acetylase route): step 1/3. Catalyzes the transfer of an acetyl group from acetyl-CoA to tetrahydrodipicolinate. In Ligilactobacillus salivarius (strain UCC118) (Lactobacillus salivarius), this protein is 2,3,4,5-tetrahydropyridine-2,6-dicarboxylate N-acetyltransferase.